We begin with the raw amino-acid sequence, 290 residues long: Xylanase inhibitor protein 2 (290 aa).

Residues methionine 1–alanine 27 form the signal peptide. The GH18 domain maps to proline 30–glycine 290. A disulfide bridge links cysteine 49 with cysteine 89. N-linked (GlcNAc...) asparagine glycosylation occurs at asparagine 112. A disulfide bridge links cysteine 187 with cysteine 216. Asparagine 285 carries N-linked (GlcNAc...) asparagine glycosylation.

Belongs to the glycosyl hydrolase 18 family. Xylanase inhibitor subfamily. Binds to fungal GH10 xylanases.

The protein resides in the secreted. Fungal xylanase inhibitor. Possesses competitive inhibiting activity against several fungal endo-1,4-beta-D-xylanases belonging to glycoside hydrolase family 10 (GH10) and family 11 (GH11). May function in plant defense against secreted fungal pathogen xylanases. Is similar to class III chitinases, but does not exhibit chitinase activity. The sequence is that of Xylanase inhibitor protein 2 from Oryza sativa subsp. japonica (Rice).